The primary structure comprises 207 residues: Probable mediator of RNA polymerase II transcription subunit 19b (207 aa).

The tract at residues 99–207 (DTAPVELPPA…SSKLDEMGAM (109 aa)) is disordered. Residues 127 to 152 (DRKHRKHKDKKEKDREHKKHKHKHKD) show a composition bias toward basic residues. The span at 153-167 (RIKDKDKDKDRDKKK) shows a compositional bias: basic and acidic residues. A compositionally biased stretch (basic residues) spans 168 to 179 (EKSGHHDKKRKN).

This sequence belongs to the plant Mediator complex subunit 19 family. Component of the Mediator complex.

The protein resides in the nucleus. In terms of biological role, component of the Mediator complex, a coactivator involved in the regulated transcription of nearly all RNA polymerase II-dependent genes. Mediator functions as a bridge to convey information from gene-specific regulatory proteins to the basal RNA polymerase II transcription machinery. The Mediator complex, having a compact conformation in its free form, is recruited to promoters by direct interactions with regulatory proteins and serves for the assembly of a functional preinitiation complex with RNA polymerase II and the general transcription factors. This Arabidopsis thaliana (Mouse-ear cress) protein is Probable mediator of RNA polymerase II transcription subunit 19b (MED19B).